We begin with the raw amino-acid sequence, 274 residues long: CDC48-associated ubiquitin-like/zinc finger protein 1 (274 aa).

The AN1-type zinc finger occupies 12-58 (LDVGKHCAYCRQLDFLPFHCSFCNEDFCSNHRLKEDHHCRWLLEHEE). 8 residues coordinate Zn(2+): Cys18, Cys21, Cys31, Cys34, Cys39, His42, His48, and Cys50. Positions 170 to 266 (NRIYIWCYLV…KDLDTLYLVH (97 aa)) are ubiquitin-like. The residue at position 273 (Ser273) is a Phosphoserine.

As to quaternary structure, interacts (via its ubiquitin-like domain) with CDC48 (via N-terminus). Associates with the 26S proteasome. Specifically interacts with the regulatory particle (RP) subunit RPN2. Exposure to arsenite, a known inducer of protein misfolding resulting in accumulation of polyubiquitinated conjugates, enhances the association with the proteoasome. Binds to ubiquitinated proteins conjugated to a 4 or more molecule ubiquitin chain. Binding to ubiquitinated proteins is zinc-dependent.

The protein localises to the cytoplasm. The protein resides in the nucleus. In terms of biological role, promotes efficient arsenite-induced clearance of stress granules (SGs). May have a role in the ubiquitin-proteasome system (UPS) protecting cells from metalloid-induced proteotoxicity. The protein is CDC48-associated ubiquitin-like/zinc finger protein 1 of Saccharomyces cerevisiae (strain ATCC 204508 / S288c) (Baker's yeast).